The primary structure comprises 357 residues: Heme A synthase (357 aa).

Transmembrane regions (helical) follow at residues 24–44 (LVRYWLYAVFVVLIAIVMVGG), 110–130 (MLARFVGFLVAVPLAFFWVTG), 140–160 (MLGLLALGGLQGAIGWWMVAS), 175–195 (IHLTTACIIITAVFYIARGLV), and 209–229 (FAGWIVFAVLVQIYLGGLVAG). Histidine 272 is a heme binding site. Helical transmembrane passes span 274 to 294 (MFAYTVLVLTVLHSLQVWKQV), 303 to 323 (TIVLVGLVLIQAVIGIATLLM), and 325 to 345 (VPLHLGLTHQFFALIVLAFAV). Position 333 (histidine 333) interacts with heme.

It belongs to the COX15/CtaA family. Type 2 subfamily. Interacts with CtaB. The cofactor is heme b.

Its subcellular location is the cell membrane. It carries out the reaction Fe(II)-heme o + 2 A + H2O = Fe(II)-heme a + 2 AH2. It functions in the pathway porphyrin-containing compound metabolism; heme A biosynthesis; heme A from heme O: step 1/1. Catalyzes the conversion of heme O to heme A by two successive hydroxylations of the methyl group at C8. The first hydroxylation forms heme I, the second hydroxylation results in an unstable dihydroxymethyl group, which spontaneously dehydrates, resulting in the formyl group of heme A. In Brucella anthropi (strain ATCC 49188 / DSM 6882 / CCUG 24695 / JCM 21032 / LMG 3331 / NBRC 15819 / NCTC 12168 / Alc 37) (Ochrobactrum anthropi), this protein is Heme A synthase.